Consider the following 122-residue polypeptide: Alpha-amylase/trypsin inhibitor (122 aa).

Cystine bridges form between C6-C55, C20-C44, C29-C85, C45-C103, and C57-C114.

This sequence belongs to the protease inhibitor I6 (cereal trypsin/alpha-amylase inhibitor) family. Seeds.

It localises to the secreted. In terms of biological role, may play a protective role against endo- and exogenous hydrolytic activities in the Ragi seeds. This Eleusine coracana (Indian finger millet) protein is Alpha-amylase/trypsin inhibitor.